The sequence spans 420 residues: Serine hydroxymethyltransferase (420 aa).

(6S)-5,6,7,8-tetrahydrofolate-binding positions include L121 and 125–127 (GHL). Position 230 is an N6-(pyridoxal phosphate)lysine (K230). 355-357 (SPF) provides a ligand contact to (6S)-5,6,7,8-tetrahydrofolate.

It belongs to the SHMT family. In terms of assembly, homodimer. Pyridoxal 5'-phosphate serves as cofactor.

The protein localises to the cytoplasm. The enzyme catalyses (6R)-5,10-methylene-5,6,7,8-tetrahydrofolate + glycine + H2O = (6S)-5,6,7,8-tetrahydrofolate + L-serine. Its pathway is one-carbon metabolism; tetrahydrofolate interconversion. It participates in amino-acid biosynthesis; glycine biosynthesis; glycine from L-serine: step 1/1. In terms of biological role, catalyzes the reversible interconversion of serine and glycine with tetrahydrofolate (THF) serving as the one-carbon carrier. This reaction serves as the major source of one-carbon groups required for the biosynthesis of purines, thymidylate, methionine, and other important biomolecules. Also exhibits THF-independent aldolase activity toward beta-hydroxyamino acids, producing glycine and aldehydes, via a retro-aldol mechanism. The polypeptide is Serine hydroxymethyltransferase (Streptococcus gordonii (strain Challis / ATCC 35105 / BCRC 15272 / CH1 / DL1 / V288)).